We begin with the raw amino-acid sequence, 347 residues long: Phosphate acyltransferase (347 aa).

This sequence belongs to the PlsX family. Homodimer. Probably interacts with PlsY.

The protein resides in the cytoplasm. The enzyme catalyses a fatty acyl-[ACP] + phosphate = an acyl phosphate + holo-[ACP]. It functions in the pathway lipid metabolism; phospholipid metabolism. Its function is as follows. Catalyzes the reversible formation of acyl-phosphate (acyl-PO(4)) from acyl-[acyl-carrier-protein] (acyl-ACP). This enzyme utilizes acyl-ACP as fatty acyl donor, but not acyl-CoA. This chain is Phosphate acyltransferase, found in Lawsonia intracellularis (strain PHE/MN1-00).